Here is a 259-residue protein sequence, read N- to C-terminus: Ras-related protein Rab-34 (259 aa).

Residue methionine 1 is modified to N-acetylmethionine. The GTP site is built by serine 62, valine 63, glycine 64, lysine 65, threonine 66, aspartate 78, tyrosine 81, and threonine 84. Threonine 66 is a Mg(2+) binding site. Positions 71–89 (RFCKDTFDKNYKATIGVDF) match the Switch 1 motif. Mg(2+)-binding residues include threonine 84 and aspartate 107. The Switch 2 signature appears at 108 to 127 (TAGQERFKCIASTYYRGAQA). The GTP site is built by glycine 110, lysine 167, aspartate 169, and serine 198. Phosphoserine is present on residues serine 241 and serine 244. 2 S-geranylgeranyl cysteine lipidation sites follow: cysteine 257 and cysteine 258.

The protein belongs to the small GTPase superfamily. Rab family. In terms of assembly, interacts with RILP. The GTP-bound form interacts with REP15. It depends on Mg(2+) as a cofactor.

It localises to the cytoplasm. The protein localises to the golgi apparatus. The protein resides in the cytoplasmic vesicle. Its subcellular location is the phagosome. It is found in the phagosome membrane. It localises to the cell projection. The protein localises to the cilium. The protein resides in the cytoskeleton. Its subcellular location is the microtubule organizing center. It is found in the centrosome. It localises to the centriole. The enzyme catalyses GTP + H2O = GDP + phosphate + H(+). With respect to regulation, regulated by guanine nucleotide exchange factors (GEFs) which promote the exchange of bound GDP for free GTP. Regulated by GTPase activating proteins (GAPs) which increase the GTP hydrolysis activity. Inhibited by GDP dissociation inhibitors (GDIs). In terms of biological role, the small GTPases Rab are key regulators of intracellular membrane trafficking, from the formation of transport vesicles to their fusion with membranes. Rabs cycle between an inactive GDP-bound form and an active GTP-bound form that is able to recruit to membranes different sets of downstream effectors directly responsible for vesicle formation, movement, tethering and fusion. RAB34 transports protein involved in the redistribution of lysosomes to the peri-Golgi region. Plays a role in the maturation of phagosomes that engulf pathogens, such as S.aureus and M.tuberculosis. Plays a role in the fusion of phagosomes with lysosomes. Involved in ciliogenesis. In particular, it is required for early steps of the intracellular cilium assembly pathway initiated by trafficking and docking of ciliary vesicles to the centrioles in the cytoplasm, followed by axoneme formation in the cytoplasm. After axoneme elongation, the centrioles migrate close to the cell surface so that ciliary vesicles can fuse with the plasma membrane to expose cilia to the extracellular space. It seems dispensable for ciliogenesis via the extracellular pathway where cilium assembly begins after migration and docking of the centriole to the plasma membrane. Also acts as a positive regulator of hedgehog signaling and regulates ciliary function. In Homo sapiens (Human), this protein is Ras-related protein Rab-34.